The primary structure comprises 345 residues: MLFIKKYSVGILFTAVLAVISGFISNLIPYRLIGAGVFALLIGMFLNPIVSKYTVLNKGLNFTSKKILRLAIILMGITLSFSQVLEVGKYSLIVMVFTLITAFGGGYLLGKLFKMDWKLSGLISAGTGICGGSAIAAISPVIDAEDSDIAYAISATFIFDVIMVILFPIAGKYFNMTDLGYGLWAGTAVNDTSSVVAAGYAFSDVAGNFSVIVKLTRTLSIVPVVLIFSYINERLIRKTKNENFKGNESTYHKDKINISKIFPWFILLFLVMVAIKSTGIIPNTISHFISKLSKFLMVMSLGAIGLKTNFKSLAKSGFAPAVHGFIISLLVVVVSFLVQMTLGQV.

The next 10 membrane-spanning stretches (helical) occupy residues 7–24, 28–50, 70–87, 91–113, 120–142, 152–174, 181–203, 209–231, 261–283, and 316–338; these read YSVGILFTAVLAVISGFI, IPYRLIGAGVFALLIGMFLNPIV, LAIILMGITLSFSQVLEV, SLIVMVFTLITAFGGGYLLGKLF, SGLISAGTGICGGSAIAAISPVI, AISATFIFDVIMVILFPIAGKYF, YGLWAGTAVNDTSSVVAAGYAFS, FSVIVKLTRTLSIVPVVLIFSYI, IFPWFILLFLVMVAIKSTGIIPN, and SGFAPAVHGFIISLLVVVVSFLV.

This sequence belongs to the UPF0324 family.

It is found in the cell membrane. This is UPF0324 membrane protein CTC_01844 from Clostridium tetani (strain Massachusetts / E88).